The sequence spans 122 residues: Large ribosomal subunit protein uL14 (122 aa).

This sequence belongs to the universal ribosomal protein uL14 family. In terms of assembly, part of the 50S ribosomal subunit. Forms a cluster with proteins L3 and L19. In the 70S ribosome, L14 and L19 interact and together make contacts with the 16S rRNA in bridges B5 and B8.

In terms of biological role, binds to 23S rRNA. Forms part of two intersubunit bridges in the 70S ribosome. The sequence is that of Large ribosomal subunit protein uL14 from Flavobacterium psychrophilum (strain ATCC 49511 / DSM 21280 / CIP 103535 / JIP02/86).